The sequence spans 749 residues: Transcription factor RFX3 (749 aa).

Positions 183–258 (HLQWLLDNYE…YHYYGIRVKP (76 aa)) form a DNA-binding region, RFX-type winged-helix.

This sequence belongs to the RFX family.

The protein resides in the nucleus. Functionally, transcription factor required for ciliogenesis and islet cell differentiation during endocrine pancreas development. This chain is Transcription factor RFX3 (rfx3), found in Xenopus tropicalis (Western clawed frog).